The chain runs to 491 residues: Katanin p60 ATPase-containing subunit A1 (491 aa).

An interaction with KATNB1 region spans residues 1–29; sequence MSLQMIVENVKLAREYALLGNYDSAMVYY. The segment at 1 to 75 is interaction with dynein and NDEL1; sequence MSLQMIVENV…VKDIMKTLES (75 aa). The interval 1–185 is interaction with microtubules; sufficient for microtubule severing activity; sequence MSLQMIVENV…EPEANKFDGT (185 aa). Serine 42 carries the phosphoserine; by DYRK2 modification. The segment at 101 to 182 is disordered; sequence PVPVERRPLP…AVTEPEANKF (82 aa). Positions 145–169 are enriched in basic and acidic residues; sequence HNDRGKAVRSREKKEQSKGREEKNK. Residue 249-256 participates in ATP binding; the sequence is GPPGTGKT.

The protein belongs to the AAA ATPase family. Katanin p60 subunit A1 subfamily. Can homooligomerize into hexameric rings, which may be promoted by interaction with microtubules. Interacts with KATNB1, which may serve as a targeting subunit. Interacts with ASPM; the katanin complex formation KATNA1:KATNB1 is required for the association of ASPM. Interacts with dynein and NDEL1. Associates with the E3 ligase complex containing DYRK2, EDD/UBR5, DDB1 and DCAF1 proteins (EDVP complex). Interacts with KLHL42 (via the kelch domains). Interacts with CUL3; the interaction is enhanced by KLHL42. Interacts with KATNB1 and KATNBL1. Interacts with CAMSAP2 and CAMSAP3; leading to regulate the length of CAMSAP-decorated microtubule stretches. Phosphorylation by DYRK2 triggers ubiquitination and subsequent degradation. In terms of processing, ubiquitinated by the BCR(KLHL42) E3 ubiquitin ligase complex, leading to its proteasomal degradation. Ubiquitinated by the EDVP E3 ligase complex and subsequently targeted for proteasomal degradation.

It is found in the cytoplasm. Its subcellular location is the midbody. The protein localises to the cytoskeleton. It localises to the microtubule organizing center. The protein resides in the centrosome. It is found in the spindle pole. Its subcellular location is the spindle. It carries out the reaction n ATP + n H2O + a microtubule = n ADP + n phosphate + (n+1) alpha/beta tubulin heterodimers.. Its activity is regulated as follows. ATPase activity is stimulated by microtubules, which promote homooligomerization. ATP-dependent microtubule severing is stimulated by interaction with KATNB1. Catalytic subunit of a complex which severs microtubules in an ATP-dependent manner. Microtubule severing may promote rapid reorganization of cellular microtubule arrays and the release of microtubules from the centrosome following nucleation. Microtubule release from the mitotic spindle poles may allow depolymerization of the microtubule end proximal to the spindle pole, leading to poleward microtubule flux and poleward motion of chromosome. The function in regulating microtubule dynamics at spindle poles seems to depend on the association of the katanin KATNA1:KATNB1 complex with ASPM which recruits it to microtubules. Reversely KATNA1:KATNB1 can enhance ASPM blocking activity on microtubule minus-end growth. Microtubule release within the cell body of neurons may be required for their transport into neuronal processes by microtubule-dependent motor proteins. This transport is required for axonal growth. This Mus musculus (Mouse) protein is Katanin p60 ATPase-containing subunit A1 (Katna1).